A 389-amino-acid polypeptide reads, in one-letter code: Na(+)/H(+) antiporter NhaA 1 (389 aa).

11 consecutive transmembrane segments (helical) span residues 12 to 32 (VLNE…ALLV), 62 to 82 (FLLW…GLEL), 97 to 117 (IVLP…LFAL), 128 to 148 (GWAI…MMCG), 157 to 177 (IFLL…IAIF), 184 to 204 (IVAF…NILG), 220 to 240 (ISVL…AFFI), 260 to 280 (FWLA…VNLS), 282 to 302 (IDIG…LFVG), 331 to 351 (LYGV…IDGL), and 365 to 385 (LAIL…LKFF).

It belongs to the NhaA Na(+)/H(+) (TC 2.A.33) antiporter family.

It is found in the cell inner membrane. It catalyses the reaction Na(+)(in) + 2 H(+)(out) = Na(+)(out) + 2 H(+)(in). Functionally, na(+)/H(+) antiporter that extrudes sodium in exchange for external protons. The chain is Na(+)/H(+) antiporter NhaA 1 from Campylobacter jejuni subsp. jejuni serotype O:6 (strain 81116 / NCTC 11828).